A 350-amino-acid polypeptide reads, in one-letter code: tRNA uridine(34) hydroxylase (350 aa).

A Rhodanese domain is found at 146–240 (DDPDALFIDM…YARKAREQGL (95 aa)). Cysteine 200 acts as the Cysteine persulfide intermediate in catalysis.

This sequence belongs to the TrhO family.

The enzyme catalyses uridine(34) in tRNA + AH2 + O2 = 5-hydroxyuridine(34) in tRNA + A + H2O. Catalyzes oxygen-dependent 5-hydroxyuridine (ho5U) modification at position 34 in tRNAs, the first step in 5-carboxymethoxyuridine (cmo5U) biosynthesis. May be part of an alternate pathway, which is able to bypass cmo5U biogenesis in a subset of tRNAs under aerobic conditions. The sequence is that of tRNA uridine(34) hydroxylase from Escherichia coli O17:K52:H18 (strain UMN026 / ExPEC).